We begin with the raw amino-acid sequence, 262 residues long: MNNIWWQTKGQGNVHLVLLHGWGLNAEVWRCIDEELSSHFTLHLVDLPGFGRSRGFGALSLADMAEAVLQQAPDKAIWLGWSLGGLVASQIALTHPERVQALVTVASSPCFSARDEWPGIKPDVLAGFQQQLSDDFQRTVERFLALQTMGTETARQDARALKKTVLALPMPEVDVLNGGLEILKTVDLRQPLQNVSMPFLRLYGYLDGLVPRKVVPMLDKLWPHSESYIFAKAAHAPFISHPVEFCHLLVALKQRVLVVSES.

Positions 15–242 constitute an AB hydrolase-1 domain; the sequence is HLVLLHGWGL…AAHAPFISHP (228 aa). Substrate is bound by residues W22, 82–83, and 143–147; these read SL and FLALQ. Residue S82 is the Nucleophile of the active site. Catalysis depends on residues D207 and H235. H235 lines the substrate pocket.

Belongs to the AB hydrolase superfamily. Carboxylesterase BioH family. As to quaternary structure, monomer.

It localises to the cytoplasm. It carries out the reaction 6-carboxyhexanoyl-[ACP] methyl ester + H2O = 6-carboxyhexanoyl-[ACP] + methanol + H(+). It functions in the pathway cofactor biosynthesis; biotin biosynthesis. In terms of biological role, the physiological role of BioH is to remove the methyl group introduced by BioC when the pimeloyl moiety is complete. It allows to synthesize pimeloyl-ACP via the fatty acid synthetic pathway through the hydrolysis of the ester bonds of pimeloyl-ACP esters. The sequence is that of Pimeloyl-[acyl-carrier protein] methyl ester esterase from Shigella flexneri.